A 440-amino-acid polypeptide reads, in one-letter code: tRNA(Ile)-lysidine synthase (440 aa).

31–36 (SGGADS) lines the ATP pocket.

This sequence belongs to the tRNA(Ile)-lysidine synthase family.

It localises to the cytoplasm. It catalyses the reaction cytidine(34) in tRNA(Ile2) + L-lysine + ATP = lysidine(34) in tRNA(Ile2) + AMP + diphosphate + H(+). In terms of biological role, ligates lysine onto the cytidine present at position 34 of the AUA codon-specific tRNA(Ile) that contains the anticodon CAU, in an ATP-dependent manner. Cytidine is converted to lysidine, thus changing the amino acid specificity of the tRNA from methionine to isoleucine. The polypeptide is tRNA(Ile)-lysidine synthase (Borreliella afzelii (strain PKo) (Borrelia afzelii)).